A 539-amino-acid polypeptide reads, in one-letter code: F-box only protein 31 (539 aa).

The disordered stretch occupies residues 11 to 53 (GPSRGCRRRQQRRGPAETAAADSEPDTDPEEERIEASAGVGGG). Phosphoserine is present on S33. The residue at position 33 (S33) is a Phosphoserine; by PKB/AKT1. Residues 33-43 (SEPDTDPEEER) show a composition bias toward acidic residues. T37 bears the Phosphothreonine mark. A D box motif is present at residues 64–69 (RCSLLE). The region spanning 64 to 110 (RCSLLELPPELLVEIFASLPGTDLPSLAQVCTKFRRILHTDTIWRRR) is the F-box domain. Positions 206, 214, 230, and 236 each coordinate Zn(2+). S278 is modified (phosphoserine; by ATM). The short motif at 297 to 299 (DDL) is the DDL motif element. Basic and acidic residues predominate over residues 377–397 (VRQEQQEGGHEAGEGRGRQGP). A disordered region spans residues 377–446 (VRQEQQEGGH…PAQCGQGQPF (70 aa)). Position 419 is a phosphothreonine; by MTOR (T419). A Phosphoserine modification is found at S480.

The protein belongs to the FBXO31 family. As to quaternary structure, part of a SCF (SKP1-cullin-F-box) protein ligase complex SCF(FBXO31) composed of CUL1, SKP1, RBX1 and FBXO31. Interacts (when phosphorylated at Ser-33) with CDC20, promoting ubiquitination by the APC/C complex. Phosphorylation at Ser-278 by ATM following gamma-irradiation results in its stabilization. Phosphorylation at Thr-419 and Ser-480 in absence of stress promotes its ubiquitination and degradation by the SCF(FBXO46) complex. Phosphorylation at Ser-33 by AKT1 promotes association with CDC20 and ubiquitination by the APC/C complex. Post-translationally, ubiquitinated by the SCF(FBXO46) complex in absence of stress, promoting its degradation. Ubiquitinated by the APC/C complex following phosphorylation at Ser-33, leading to its degradation by the proteasome. As to expression, highly expressed in brain. Expressed at moderate levels in most tissues, except bone marrow.

It is found in the cytoplasm. The protein localises to the cytoskeleton. It localises to the microtubule organizing center. The protein resides in the centrosome. Its pathway is protein modification; protein ubiquitination. Substrate-recognition component of the SCF(FBXO31) protein ligase complex, which specifically mediates the ubiquitination of proteins amidated at their C-terminus in response to oxidative stress, leading to their degradation by the proteasome. FBXO31 specifically recognizes and binds C-terminal peptides bearing an amide: C-terminal amidation in response to oxidative stress takes place following protein fragmentation. The SCF(FBXO31) also plays a role in G1 arrest following DNA damage by mediating ubiquitination of phosphorylated cyclin-D1 (CCND1), promoting its degradation by the proteasome, resulting in G1 arrest. The SCF(FBXO31) complex is however not a major regulator of CCND1 stability during the G1/S transition. In response to genotoxic stress, the SCF(FBXO31) complex directs ubiquitination and degradation of phosphorylated MDM2, thereby promoting p53/TP53-mediated DNA damage response. SCF(FBXO31) complex is required for genomic integrity by catalyzing ubiquitination and degradation of cyclin-A (CCNA1 and/or CCNA2) during the G1 phase. In response to genotoxic stress, the SCF(FBXO31) complex directs ubiquitination and degradation of phosphorylated FBXO46 and MAP2K6. SCF(FBXO31) complex promotes ubiquitination and degradation of CDT1 during the G2 phase to prevent re-replication. The SCF(FBXO31) complex also mediates ubiquitination and degradation of DUSP6, OGT and PARD6A. This Homo sapiens (Human) protein is F-box only protein 31.